The chain runs to 946 residues: Bifunctional glutamine synthetase adenylyltransferase/adenylyl-removing enzyme (946 aa).

The tract at residues 1–440 (MKPLSSPLQQ…VFNELIGDDE (440 aa)) is adenylyl removase. The interval 449-946 (SEQWRELWQD…ASWQKWLVEE (498 aa)) is adenylyl transferase.

It belongs to the GlnE family. Mg(2+) is required as a cofactor.

It carries out the reaction [glutamine synthetase]-O(4)-(5'-adenylyl)-L-tyrosine + phosphate = [glutamine synthetase]-L-tyrosine + ADP. The enzyme catalyses [glutamine synthetase]-L-tyrosine + ATP = [glutamine synthetase]-O(4)-(5'-adenylyl)-L-tyrosine + diphosphate. Functionally, involved in the regulation of glutamine synthetase GlnA, a key enzyme in the process to assimilate ammonia. When cellular nitrogen levels are high, the C-terminal adenylyl transferase (AT) inactivates GlnA by covalent transfer of an adenylyl group from ATP to specific tyrosine residue of GlnA, thus reducing its activity. Conversely, when nitrogen levels are low, the N-terminal adenylyl removase (AR) activates GlnA by removing the adenylyl group by phosphorolysis, increasing its activity. The regulatory region of GlnE binds the signal transduction protein PII (GlnB) which indicates the nitrogen status of the cell. The polypeptide is Bifunctional glutamine synthetase adenylyltransferase/adenylyl-removing enzyme (Shigella flexneri).